The following is a 163-amino-acid chain: NADPH-dependent 7-cyano-7-deazaguanine reductase (163 aa).

Residues 1–10 (MSKPPRRSPR) are compositionally biased toward basic residues. Positions 1–23 (MSKPPRRSPRKPTPASPELQLGH) are disordered. The active-site Thioimide intermediate is cysteine 61. The active-site Proton donor is aspartate 68. Substrate contacts are provided by residues 83–85 (LES) and 102–103 (HE).

The protein belongs to the GTP cyclohydrolase I family. QueF type 1 subfamily.

It localises to the cytoplasm. The enzyme catalyses 7-aminomethyl-7-carbaguanine + 2 NADP(+) = 7-cyano-7-deazaguanine + 2 NADPH + 3 H(+). It participates in tRNA modification; tRNA-queuosine biosynthesis. Catalyzes the NADPH-dependent reduction of 7-cyano-7-deazaguanine (preQ0) to 7-aminomethyl-7-deazaguanine (preQ1). In Rhodopseudomonas palustris (strain BisA53), this protein is NADPH-dependent 7-cyano-7-deazaguanine reductase.